A 1492-amino-acid chain; its full sequence is Cystic fibrosis transmembrane conductance regulator (1492 aa).

At 1 to 78 (MQRSPIEKAN…KLVNALRRCF (78 aa)) the chain is on the cytoplasmic side. A helical transmembrane segment spans residues 79-99 (FWRFLFYGILLYFVEFTKAVQ). Residues 82–366 (FLFYGILLYF…SAIQTWYDSL (285 aa)) enclose the ABC transmembrane type-1 1 domain. The Extracellular segment spans residues 100–123 (PLCLGRIIASYNAKNTYEREIAYY). A helical transmembrane segment spans residues 124–147 (LALGLCLLFVVRTLFLHPAVFGLQ). Topologically, residues 148-196 (HLGMQMRIALFSLIYKKILKMSSRVLDKIDTGQLVSLLSNNLNKFDEGV) are cytoplasmic. The helical transmembrane segment at 197 to 217 (AVAHFVWIAPVQVVLLMGLIW) threads the bilayer. At 218 to 223 (NELTEF) the chain is on the extracellular side. The helical transmembrane segment at 224–244 (VFCGLGFLIMLALFQAWLGKK) threads the bilayer. At 245–299 (MMQYRDKRAGKINERLAITSEIIDNIQSVKVYCWEDAMEKIIDDIRQVELKLTRK) the chain is on the cytoplasmic side. Residues 300–320 (VAYCRYFSSSAFFFSGFFVVF) traverse the membrane as a helical segment. The Extracellular portion of the chain corresponds to 321 to 340 (LSVVPYAFIHTIKLRRIFTT). A helical membrane pass occupies residues 341–359 (ISYNIVLRMTVTRQFPSAI). At 360 to 867 (QTWYDSLGAI…YLRYVTTNRN (508 aa)) the chain is on the cytoplasmic side. Residues W402, S435, 459 to 466 (GSTGSGKS), and Q494 contribute to the ATP site. The region spanning 424-647 (NGDDGLFFSN…KPDFSSQLLG (224 aa)) is the ABC transporter 1 domain. The disordered R region stretch occupies residues 655–840 (SAERRNSILT…EEINEEDLKE (186 aa)). Residues 868-888 (LVFVLILCLVIFLAEVAASLA) form a helical membrane-spanning segment. The 302-residue stretch at 868-1169 (LVFVLILCLV…AVNSSIDVDG (302 aa)) folds into the ABC transmembrane type-1 2 domain. Topologically, residues 889–932 (GLWIISGLAINTGSQTNDTSTDLSHLSVFSKFITNGSHYYIFYI) are extracellular. Residues N905 and N923 are each glycosylated (N-linked (GlcNAc...) asparagine). Residues 933-953 (YVGLADSFLALGVIRGLPLVH) traverse the membrane as a discontinuously helical segment. Residues 954 to 1004 (TLVTVSKDLHKQMLHSVLQGPMTAFNKMKAGRILNRFIKDTAIIDDMLPLT) lie on the Cytoplasmic side of the membrane. Residues 1005 to 1025 (VFDFVQLILIVVGAICVVSVL) traverse the membrane as a helical segment. Residues 1026-1027 (QP) are Extracellular-facing. The chain crosses the membrane as a helical span at residues 1028-1048 (YTLLAAIPVAVIFIMLRAYFL). Topologically, residues 1049–1109 (RTSQQLKQLE…TANWFLYLST (61 aa)) are cytoplasmic. Residues 1110-1130 (LRWFQMRIDIVFVLFFIAVTF) traverse the membrane as a helical segment. At 1131–1144 (IAIATHDVGEGQVG) the chain is on the extracellular side. Residues 1145–1165 (IILTLAMNITSTLQWAVNSSI) traverse the membrane as a helical segment. At 1166 to 1492 (DVDGLMRSVS…AEEDLQETRL (327 aa)) the chain is on the cytoplasmic side. Positions 1220–1453 (MMVNNLTAKY…ASLFKQVFGH (234 aa)) constitute an ABC transporter 2 domain. ATP is bound by residues Y1229 and 1254-1261 (GRTGAGKS). Basic residues predominate over residues 1465-1474 (RNSSKRKTRP). The tract at residues 1465 to 1492 (RNSSKRKTRPKISALQEEAEEDLQETRL) is disordered. A compositionally biased stretch (acidic residues) spans 1481 to 1492 (EEAEEDLQETRL). The PDZ-binding signature appears at 1483-1485 (AEE).

The protein belongs to the ABC transporter superfamily. ABCC family. CFTR transporter (TC 3.A.1.202) subfamily. As to quaternary structure, monomer; does not require oligomerization for channel activity. May form oligomers in the membrane. Phosphorylated; cAMP treatment promotes phosphorylation and activates the channel. Dephosphorylation decreases the ATPase activity (in vitro). Phosphorylation at PKA sites activates the channel. Phosphorylation at PKC sites enhances the response to phosphorylation by PKA. Expressed in the rectal gland (at protein level).

It is found in the apical cell membrane. It localises to the early endosome membrane. Its subcellular location is the cell membrane. The protein resides in the recycling endosome membrane. The protein localises to the endoplasmic reticulum membrane. It catalyses the reaction ATP + H2O + closed Cl(-) channel = ADP + phosphate + open Cl(-) channel.. The catalysed reaction is chloride(in) = chloride(out). It carries out the reaction hydrogencarbonate(in) = hydrogencarbonate(out). The enzyme catalyses ATP + H2O = ADP + phosphate + H(+). Functionally, epithelial ion channel that plays an important role in the regulation of epithelial ion and water transport and fluid homeostasis. Mediates the transport of chloride ions across the cell membrane. Possesses an intrinsic ATPase activity and utilizes ATP to gate its channel; the passive flow of anions through the channel is gated by cycles of ATP binding and hydrolysis by the ATP-binding domains. The ion channel is also permeable to HCO(3)(-); selectivity depends on the extracellular chloride concentration. Exerts its function also by modulating the activity of other ion channels and transporters. Contributes to the regulation of the pH and the ion content of the epithelial fluid layer. This Squalus acanthias (Spiny dogfish) protein is Cystic fibrosis transmembrane conductance regulator.